The chain runs to 160 residues: Putative pre-16S rRNA nuclease (160 aa).

Belongs to the YqgF nuclease family.

The protein resides in the cytoplasm. Functionally, could be a nuclease involved in processing of the 5'-end of pre-16S rRNA. The sequence is that of Putative pre-16S rRNA nuclease from Chelativorans sp. (strain BNC1).